A 182-amino-acid polypeptide reads, in one-letter code: Probable chorismate pyruvate-lyase (182 aa).

3 residues coordinate substrate: arginine 81, leucine 119, and glutamate 171.

The protein belongs to the UbiC family.

The protein resides in the cytoplasm. The catalysed reaction is chorismate = 4-hydroxybenzoate + pyruvate. It functions in the pathway cofactor biosynthesis; ubiquinone biosynthesis. Its function is as follows. Removes the pyruvyl group from chorismate, with concomitant aromatization of the ring, to provide 4-hydroxybenzoate (4HB) for the ubiquinone pathway. This chain is Probable chorismate pyruvate-lyase, found in Pseudomonas putida (Arthrobacter siderocapsulatus).